We begin with the raw amino-acid sequence, 2265 residues long: MLLVLCLTMICFHVCVNQDSGPEYADVVFLVDSSDHLGLKSFPLVKTFIHKMISSLPIEANKYRVALAQYSDALHNEFQLGTFKNRNPMLNHLKKNFGFIGGSLKIGNALQEAHRTYFSAPTNGRDKKQFPPILVVLASAESEDDVEEAAKALREDGVKIISVGVQKASEENLKAMATSQFHFNLRTARDLSVFAPNMTEIIKDVTQYREGMADDIIVEACQGPSVADVVFLLDMAINGSQEDLDHLKAFLGESISALDIKENCMRVGLVTYSNETRVISSLSTGNNKTEVLQRIQDLSPQVGQAYTGAALRKTRKEIFSAQRGSRKNQGVPQIAVLVTHRASEDNVTKAAVNLRREGVTIFTMGIEGANPDELEKIASHPAEQFTSKLGNFSELATHNQTFLKKLRNQITHTVSVFSERTETLKSACVDTEEADIYLLIDGSGSTQPTDFHEMKTFLSEVVGMFNIAPHKVRVGAVQYADTWDLEFEISKYSNKPDLGKAIENIRQMGGNTNTGAALNFTLKLLQRAKKERGSKVPCHLVVLTNGMSRDSVLGPAHKLREENIRVHAIGVKEANQTQLREIAGEEKRVYYVHEFDALRNIRNQVVQEICAEEACRDMKADIMFLVDSSGSIGPENFSKMKMFMKNLVSKSQIGADRVQIGVVQFSHENKEEFQLNTFMSQSDIANAIDRMTHIGETTLTGSALTFVSQYFSPDKGARPNVRKFLILITDGEAQDIVRDPAIALRKEGVIIYSVGVFGSNVTQLEEISGKPEMVFYVENFDILQHIEDDLVLGICSPREECKRIEVLDVVFVIDSSGSIDYQEYNIMKDFMIGLVKKADVGKNQVRFGALKYADDPEVLFYLDELGTKLEVVSVLQNDHPMGGNTYTAEALAFSDHMFTEARGSRLHKGVPQVLIVITDGESHDAEKLNTTAKALRDKGILVLAVGIAGANSWELLAMAGSSDKYYFVETFGGLKGIFSDVSASVCNSSKVDCEIEKVDLVFLMDGSNSIHPDDFQKMKGFLVSVVQDFDVSLNRVRIGVAQFSDSYRSEFLLGTFTGEREISTQIEGIQQIFGYTHIGDALRKVKYYFQPDMGSRINAGTPQVLLVLTDGRSQDEVAQAAEELRHKGVDIYSVGIGDVDDQELVQITGTAEKKLTVHNFDELKKVKKRIVRNICTSGGESNCFVDVVVGFDISSLQRGQTLLEGQPWMGSYLQDLLRAISSLNGVSCEVGTETQVSIAFQVTNAMERYPSKFEIYSENILSSLQGVTVNGPSRLNANLLSSLWDTFQNKSAARGKVVLLFSDGLDDGIEKLEQKSDELRKEGLNALITIAVDGAADSSDLADLLYIEFGKGFEYRTQFTIGMRNLGSQLSRQLINVAERTCCCLLCKCTGGDGAMGDPGSAGKKGPPGFKGSDGYLGEEGIAGERGASGPMGEQGTKGCFGAKGPKGTRGLSGEEGEVGEDGLDGLDGEQGDHGIPGRRGEKGDEGSQGNPGRRGAAGDRGAKGLRGDPGTPGRDSSIQGPKGLKGDLGRQGRRGWPGSPGTPGSRRKMVVHGRRGHIGPQGNPGTPGPDGLAGSPGLRGPQGPRGEVGEKGEKGSLGMKGPQGPPGPGGQAGSQGHLGSQGNKGEPGDLGEKGAAGFPGPRGLQGDDGSPGYGSIGRKGTKGQEGFPGESGLKGDIGDPGDPGEAGPKGARGKTVSAGIPGEPGSPGEPGPPGRKGVKGARGLASFSTCDLIQYVRDHSPGRHGKPECPVHPTELVFVLDQSRDVTEQDFERMKGMMVSLVRDVKVREANCPVGARVAILAYNSHTRHLIRFSDAYRKDQLLTAIKALPYERSSDSREIGKAMRFISRNVFKRTLPGAHVRRIATFFSSGPSADAQTITTAAMEFSALDIVPVVIAFSNVPSVKRAFSIDDTGTFQVIVVPSGSDEGPALERLQRCTFCYDLCKPDASCDQAKPPPIQSYLDTAFLLDGSRHVGSAEFEDMRDFLEALLDHFEITSEPETSVTGDRVALLSHAPLDFLPNTQRSPVRTEFNLTSYSSKRLMKRHVDQAVQQLHGDAFLGHALGWALDNVFLNTPNLRRNKVIFVISAGETSHLDAETLKKESLRAKCHGYALFVFSLGPDWDDKELEDLASHPVDQHLIQLGRIHKPDHGYSVKFVKSFINSIRHGINKYPPVNLKAKCNRLGSRDLKPPPRQFRSFVPGPQKANLKDHTAEAAKLFQDKKRLSSMLKGGRATISSLSRSTRYAFKQGKEAIKATSKLGKRSA.

A signal peptide spans 1–18 (MLLVLCLTMICFHVCVNQ). The nonhelical region stretch occupies residues 19–1390 (DSGPEYADVV…TCCCLLCKCT (1372 aa)). VWFA domains lie at 26–205 (DVVF…IKDV), 228–406 (DVVF…LKKL), 435–605 (DIYL…RNQV), 621–790 (DIMF…EDDL), 808–981 (DVVF…FSDV), 999–1170 (DLVF…KKRI), and 1186–1378 (DVVV…INVA). Asparagine 197, asparagine 238, and asparagine 346 each carry an N-linked (GlcNAc...) asparagine glycan. An N-linked (GlcNAc...) asparagine glycan is attached at asparagine 760. Residues 1391 to 1724 (GGDGAMGDPG…GRKGVKGARG (334 aa)) form a triple-helical region region. The tract at residues 1398 to 1722 (DPGSAGKKGP…PPGRKGVKGA (325 aa)) is disordered. Positions 1455 to 1470 (EEGEVGEDGLDGLDGE) are enriched in acidic residues. Residues 1497-1507 (AAGDRGAKGLR) show a composition bias toward basic and acidic residues. Positions 1507-1509 (RGD) match the Cell attachment site motif. The segment covering 1546–1558 (SRRKMVVHGRRGH) has biased composition (basic residues). The interval 1725-2265 (LASFSTCDLI…ATSKLGKRSA (541 aa)) is nonhelical region. VWFA domains follow at residues 1756 to 1936 (ELVF…ERLQ) and 1964 to 2165 (DTAF…INSI). The segment at 2186-2205 (SRDLKPPPRQFRSFVPGPQK) is disordered.

Belongs to the type VI collagen family. As to quaternary structure, trimers composed of three different chains: alpha-1(VI), alpha-2(VI), and alpha-3(VI) or alpha-4(VI) or alpha-5(VI) or alpha-6(VI). Post-translationally, prolines at the third position of the tripeptide repeating unit (G-X-Y) are hydroxylated in some or all of the chains. In newborn, it is expressed in lung, heart, kidney, muscle, brain, intestine, skin, femur and sternum. In adult, it is expressed in lung, heart, muscle, ovary, brain, liver and sternum.

The protein resides in the secreted. It localises to the extracellular space. Its subcellular location is the extracellular matrix. Functionally, collagen VI acts as a cell-binding protein. The sequence is that of Collagen alpha-6(VI) chain (Col6a6) from Mus musculus (Mouse).